Here is a 1275-residue protein sequence, read N- to C-terminus: Inner capsid protein lambda-1 (1275 aa).

Residues Met-1–Ser-12 show a composition bias toward basic residues. The segment at Met-1 to Gln-147 is disordered. A compositionally biased stretch (basic and acidic residues) spans Asp-18–Ser-35. Positions Thr-55–Thr-66 are enriched in polar residues. Basic and acidic residues-rich tracts occupy residues Ala-80–Ala-98 and Ala-105–Lys-117. Over residues Ala-118 to Val-139 the composition is skewed to polar residues. The C2H2-type zinc finger occupies Tyr-181–His-203.

It belongs to the turreted BTV-fold inner capsid family. In terms of assembly, homodecamer; each decamer is made up of two conformers of VP2, called VP2A and VP2B. 12 homodecamers assemble to form an icosahedral capsid. Interacts with protein mu-NS; in viral inclusions. The cofactor is Mg(2+). It depends on Mn(2+) as a cofactor.

The protein localises to the virion. It catalyses the reaction ATP + H2O = ADP + phosphate + H(+). In terms of biological role, inner capsid protein that self-assembles to form an icosahedral capsid with a T=2 symmetry, which consists of 120 copies of VP2, with channels at each of its five-fold vertices. This capsid constitutes the innermost concentric layer of the viral mature particle. Displays NTPase, RNA 5'-triphosphatase (RTPase) and RNA helicase activities and probably participates in transcription of the viral genome. Helicase activity might be involved in unwinding or reannealing dsRNA during RNA synthesis. RTPase enzymatic activity represents the first step in RNA capping, which yields a 5'-diphosphorylated plus-strand RNA. The protein is Inner capsid protein lambda-1 of Reovirus type 2 (strain D5/Jones) (T2J).